The primary structure comprises 758 residues: 5-methyltetrahydropteroyltriglutamate--homocysteine methyltransferase (758 aa).

Residues 17–20 (RELK) and Lys-117 contribute to the 5-methyltetrahydropteroyltri-L-glutamate site. Residues 434 to 436 (IGS) and Glu-487 contribute to the L-homocysteine site. Residues 434–436 (IGS) and Glu-487 contribute to the L-methionine site. Residues 518–519 (RC) and Trp-564 each bind 5-methyltetrahydropteroyltri-L-glutamate. Residue Asp-602 coordinates L-homocysteine. L-methionine is bound at residue Asp-602. Glu-608 serves as a coordination point for 5-methyltetrahydropteroyltri-L-glutamate. Residues His-644, Cys-646, and Glu-668 each contribute to the Zn(2+) site. The active-site Proton donor is His-697. Residue Cys-729 coordinates Zn(2+).

It belongs to the vitamin-B12 independent methionine synthase family. Zn(2+) serves as cofactor.

It carries out the reaction 5-methyltetrahydropteroyltri-L-glutamate + L-homocysteine = tetrahydropteroyltri-L-glutamate + L-methionine. Its pathway is amino-acid biosynthesis; L-methionine biosynthesis via de novo pathway; L-methionine from L-homocysteine (MetE route): step 1/1. Its function is as follows. Catalyzes the transfer of a methyl group from 5-methyltetrahydrofolate to homocysteine resulting in methionine formation. The sequence is that of 5-methyltetrahydropteroyltriglutamate--homocysteine methyltransferase from Sodalis glossinidius (strain morsitans).